The primary structure comprises 410 residues: Cysteine desulfurase IscS (410 aa).

Residues 80–81 (AT), N160, Q188, and 208–210 (SGH) each bind pyridoxal 5'-phosphate. K211 bears the N6-(pyridoxal phosphate)lysine mark. T248 contributes to the pyridoxal 5'-phosphate binding site. C334 (cysteine persulfide intermediate) is an active-site residue. A [2Fe-2S] cluster-binding site is contributed by C334.

The protein belongs to the class-V pyridoxal-phosphate-dependent aminotransferase family. NifS/IscS subfamily. Homodimer. Forms a heterotetramer with IscU, interacts with other sulfur acceptors. Pyridoxal 5'-phosphate serves as cofactor.

The protein localises to the cytoplasm. The enzyme catalyses (sulfur carrier)-H + L-cysteine = (sulfur carrier)-SH + L-alanine. It functions in the pathway cofactor biosynthesis; iron-sulfur cluster biosynthesis. Functionally, master enzyme that delivers sulfur to a number of partners involved in Fe-S cluster assembly, tRNA modification or cofactor biosynthesis. Catalyzes the removal of elemental sulfur atoms from cysteine to produce alanine. Functions as a sulfur delivery protein for Fe-S cluster synthesis onto IscU, an Fe-S scaffold assembly protein, as well as other S acceptor proteins. This chain is Cysteine desulfurase IscS, found in Rickettsia conorii (strain ATCC VR-613 / Malish 7).